Here is a 75-residue protein sequence, read N- to C-terminus: Small ribosomal subunit protein eS17 (75 aa).

It belongs to the eukaryotic ribosomal protein eS17 family.

In Thermoplasma acidophilum (strain ATCC 25905 / DSM 1728 / JCM 9062 / NBRC 15155 / AMRC-C165), this protein is Small ribosomal subunit protein eS17.